The chain runs to 75 residues: MGGISIWQLLIIVAIIVLLFGTKKLRTLGTDLGESVKGFKKAMNEDEPKDAEFKSLNKDESATAGSEKVKDKEQA.

The chain crosses the membrane as a helical span at residues 1–21; sequence MGGISIWQLLIIVAIIVLLFG. The segment at 50–75 is disordered; the sequence is DAEFKSLNKDESATAGSEKVKDKEQA.

This sequence belongs to the TatA/E family. In terms of assembly, the Tat system comprises two distinct complexes: a TatABC complex, containing multiple copies of TatA, TatB and TatC subunits, and a separate TatA complex, containing only TatA subunits. Substrates initially bind to the TatABC complex, which probably triggers association of the separate TatA complex to form the active translocon.

It localises to the cell inner membrane. In terms of biological role, part of the twin-arginine translocation (Tat) system that transports large folded proteins containing a characteristic twin-arginine motif in their signal peptide across membranes. TatA could form the protein-conducting channel of the Tat system. The sequence is that of Sec-independent protein translocase protein TatA from Mannheimia succiniciproducens (strain KCTC 0769BP / MBEL55E).